Here is a 213-residue protein sequence, read N- to C-terminus: Thiamine-phosphate synthase (213 aa).

Residues 40 to 44 (QYRDK) and N72 each bind 4-amino-2-methyl-5-(diphosphooxymethyl)pyrimidine. The Mg(2+) site is built by D73 and D91. Position 110 (T110) interacts with 4-amino-2-methyl-5-(diphosphooxymethyl)pyrimidine. 137–139 (SHT) serves as a coordination point for 2-[(2R,5Z)-2-carboxy-4-methylthiazol-5(2H)-ylidene]ethyl phosphate. Position 140 (K140) interacts with 4-amino-2-methyl-5-(diphosphooxymethyl)pyrimidine. A 2-[(2R,5Z)-2-carboxy-4-methylthiazol-5(2H)-ylidene]ethyl phosphate-binding site is contributed by G167.

This sequence belongs to the thiamine-phosphate synthase family. Mg(2+) serves as cofactor.

It catalyses the reaction 2-[(2R,5Z)-2-carboxy-4-methylthiazol-5(2H)-ylidene]ethyl phosphate + 4-amino-2-methyl-5-(diphosphooxymethyl)pyrimidine + 2 H(+) = thiamine phosphate + CO2 + diphosphate. The enzyme catalyses 2-(2-carboxy-4-methylthiazol-5-yl)ethyl phosphate + 4-amino-2-methyl-5-(diphosphooxymethyl)pyrimidine + 2 H(+) = thiamine phosphate + CO2 + diphosphate. The catalysed reaction is 4-methyl-5-(2-phosphooxyethyl)-thiazole + 4-amino-2-methyl-5-(diphosphooxymethyl)pyrimidine + H(+) = thiamine phosphate + diphosphate. The protein operates within cofactor biosynthesis; thiamine diphosphate biosynthesis; thiamine phosphate from 4-amino-2-methyl-5-diphosphomethylpyrimidine and 4-methyl-5-(2-phosphoethyl)-thiazole: step 1/1. Condenses 4-methyl-5-(beta-hydroxyethyl)thiazole monophosphate (THZ-P) and 2-methyl-4-amino-5-hydroxymethyl pyrimidine pyrophosphate (HMP-PP) to form thiamine monophosphate (TMP). The polypeptide is Thiamine-phosphate synthase (Stutzerimonas stutzeri (strain A1501) (Pseudomonas stutzeri)).